The sequence spans 495 residues: Surface E' protein (495 aa).

Residues 224–235 traverse the membrane as a helical segment; sequence GTLIGLVALIGV.

It is found in the cell membrane. The chain is Surface E' protein (cbbE') from Coxiella burnetii.